The sequence spans 84 residues: Cell division topological specificity factor (84 aa).

This sequence belongs to the MinE family.

Functionally, prevents the cell division inhibition by proteins MinC and MinD at internal division sites while permitting inhibition at polar sites. This ensures cell division at the proper site by restricting the formation of a division septum at the midpoint of the long axis of the cell. The chain is Cell division topological specificity factor from Pseudomonas fluorescens (strain ATCC BAA-477 / NRRL B-23932 / Pf-5).